The primary structure comprises 219 residues: Adenylate kinase (219 aa).

10-15 (GAGKGT) is an ATP binding site. The tract at residues 30–59 (ATGDLFRANISQGTDLGKQARAYMDAGQLV) is NMP. Residues Thr31, Arg36, 57-59 (QLV), 85-88 (GFPR), and Gln92 each bind AMP. The interval 126–164 (GRRVCRNNSAHVFHLTYNPPKAEGVCDACGGELYQRDDD) is LID. Residues Arg127 and 137–138 (VF) each bind ATP. Residues Arg161 and Arg172 each coordinate AMP. Position 200 (Gly200) interacts with ATP.

This sequence belongs to the adenylate kinase family. As to quaternary structure, monomer.

The protein resides in the cytoplasm. The catalysed reaction is AMP + ATP = 2 ADP. It participates in purine metabolism; AMP biosynthesis via salvage pathway; AMP from ADP: step 1/1. Its function is as follows. Catalyzes the reversible transfer of the terminal phosphate group between ATP and AMP. Plays an important role in cellular energy homeostasis and in adenine nucleotide metabolism. This is Adenylate kinase from Streptomyces griseus subsp. griseus (strain JCM 4626 / CBS 651.72 / NBRC 13350 / KCC S-0626 / ISP 5235).